The primary structure comprises 127 residues: Fluoride-specific ion channel FluC (127 aa).

A run of 4 helical transmembrane segments spans residues 8 to 28 (LLIA…QYWF), 37 to 57 (PWGT…VYAI), 68 to 88 (WKFL…TFSY), and 100 to 120 (ILFL…AFAG). The Na(+) site is built by glycine 78 and threonine 81.

Belongs to the fluoride channel Fluc/FEX (TC 1.A.43) family.

The protein resides in the cell inner membrane. The enzyme catalyses fluoride(in) = fluoride(out). Its activity is regulated as follows. Na(+) is not transported, but it plays an essential structural role and its presence is essential for fluoride channel function. In terms of biological role, fluoride-specific ion channel. Important for reducing fluoride concentration in the cell, thus reducing its toxicity. The sequence is that of Fluoride-specific ion channel FluC from Leptospira interrogans serogroup Icterohaemorrhagiae serovar Lai (strain 56601).